Reading from the N-terminus, the 251-residue chain is MRRPMVAGNWKMHGTRASVAELTQGLGNMLIPEGIEVAVFPPALFINEVIDGLKGKGITVGAQNSAVQPEQGALTGEVAPSQLAEVGCKFVLIGHSERRQVIGESEEVLNRKFAAAQKSGLTPVLCIGETLEEREAGKTLEVVGRQLSSVIDAFGIAAFANAVIAYEPVWAIGTGLTASPQQAQDVHAAIRKQLAAKDAEVAQNVQLLYGGSVKAANAAELFGMPDIDGGLIGGASLNADEFGAICRAAGN.

Asn9–Lys11 lines the substrate pocket. His95 acts as the Electrophile in catalysis. Catalysis depends on Glu167, which acts as the Proton acceptor. Residues Gly173, Ser212, and Gly233–Gly234 each bind substrate.

This sequence belongs to the triosephosphate isomerase family. Homodimer.

The protein resides in the cytoplasm. It catalyses the reaction D-glyceraldehyde 3-phosphate = dihydroxyacetone phosphate. The protein operates within carbohydrate biosynthesis; gluconeogenesis. It participates in carbohydrate degradation; glycolysis; D-glyceraldehyde 3-phosphate from glycerone phosphate: step 1/1. Functionally, involved in the gluconeogenesis. Catalyzes stereospecifically the conversion of dihydroxyacetone phosphate (DHAP) to D-glyceraldehyde-3-phosphate (G3P). This is Triosephosphate isomerase from Pseudomonas putida (strain W619).